The chain runs to 383 residues: 8-amino-7-oxononanoate synthase (383 aa).

Position 20 (Arg-20) interacts with substrate. Residue 107–108 (GY) coordinates pyridoxal 5'-phosphate. His-132 is a substrate binding site. Ser-178, His-206, and Thr-233 together coordinate pyridoxal 5'-phosphate. N6-(pyridoxal phosphate)lysine is present on Lys-236. Thr-349 contributes to the substrate binding site.

The protein belongs to the class-II pyridoxal-phosphate-dependent aminotransferase family. BioF subfamily. As to quaternary structure, homodimer. Pyridoxal 5'-phosphate serves as cofactor.

The enzyme catalyses 6-carboxyhexanoyl-[ACP] + L-alanine + H(+) = (8S)-8-amino-7-oxononanoate + holo-[ACP] + CO2. It participates in cofactor biosynthesis; biotin biosynthesis. Its function is as follows. Catalyzes the decarboxylative condensation of pimeloyl-[acyl-carrier protein] and L-alanine to produce 8-amino-7-oxononanoate (AON), [acyl-carrier protein], and carbon dioxide. The polypeptide is 8-amino-7-oxononanoate synthase (Chromobacterium violaceum (strain ATCC 12472 / DSM 30191 / JCM 1249 / CCUG 213 / NBRC 12614 / NCIMB 9131 / NCTC 9757 / MK)).